The following is a 163-amino-acid chain: 3-isopropylmalate dehydratase small subunit (163 aa).

This sequence belongs to the LeuD family. LeuD type 2 subfamily. Heterodimer of LeuC and LeuD.

The catalysed reaction is (2R,3S)-3-isopropylmalate = (2S)-2-isopropylmalate. Its pathway is amino-acid biosynthesis; L-leucine biosynthesis; L-leucine from 3-methyl-2-oxobutanoate: step 2/4. Functionally, catalyzes the isomerization between 2-isopropylmalate and 3-isopropylmalate, via the formation of 2-isopropylmaleate. In Clostridioides difficile (strain 630) (Peptoclostridium difficile), this protein is 3-isopropylmalate dehydratase small subunit.